The primary structure comprises 340 residues: uncharacterized protein (340 aa).

The N-terminal stretch at 1–25 (MLGIRAMLVMLDYYWIQLITNNDTR) is a signal peptide. Over 26–225 (SNNTDTIFVS…RRYMYLFSVS (200 aa)) the chain is Lumenal. 12 N-linked (GlcNAc...) asparagine; by host glycosylation sites follow: Asn27, Asn54, Asn57, Asn68, Asn72, Asn78, Asn83, Asn107, Asn118, Asn146, Asn173, and Asn180. Residues 226–246 (CAGITGTVSIILVSLSLLILI) traverse the membrane as a helical segment. Residues 247 to 340 (CYYRCGRLLI…PMHMVVCMPA (94 aa)) are Cytoplasmic-facing.

The protein belongs to the HHV-5 UL20 protein family.

The protein localises to the host endoplasmic reticulum membrane. This is an uncharacterized protein from Human cytomegalovirus (strain AD169) (HHV-5).